A 385-amino-acid chain; its full sequence is Prostacyclin receptor (385 aa).

The Extracellular portion of the chain corresponds to 1 to 16 (MADSCRNLTYVRDSVG). 2 disulfide bridges follow: C5–C165 and C92–C170. N7 carries an N-linked (GlcNAc...) asparagine glycan. Residues 17–38 (PATSTLMFVAGVVGNGLALGIL) form a helical membrane-spanning segment. Over 39–51 (GARRHSRPSAFAV) the chain is Cytoplasmic. Residues 52–76 (LVTGLGVTDLLGTCFLSPAVFAAYA) traverse the membrane as a helical segment. At 77–94 (RNSSLLGLARGRPALCDA) the chain is on the extracellular side. The helical transmembrane segment at 95–115 (FAFAMTFFGLASTLILFAMAV) threads the bilayer. Over 116–134 (ERCLALSHPYLYAQLDGPR) the chain is Cytoplasmic. A helical transmembrane segment spans residues 135-158 (RARLALPAIYAFCTIFCSLPFLGL). Residues 159-181 (GQHQQYCPGSWCFIRMRSAEPGG) are Extracellular-facing. Residues 182-208 (CAFLLAYASLVALLVAAIVLCNGSVTL) traverse the membrane as a helical segment. Residues 209–234 (SLCRMYRQQRRHQARCPRPRAGEDEV) lie on the Cytoplasmic side of the membrane. The helical transmembrane segment at 235–259 (DHLILLALMTGIMAVCSLPLTPQIR) threads the bilayer. Residues 260–273 (GFTQAIAPDSSEMG) lie on the Extracellular side of the membrane. A helical membrane pass occupies residues 274 to 294 (DLLAFRFNAFNPILDPWVFIL). Over 295 to 385 (FRKSVFQRLK…AGSEAACSLC (91 aa)) the chain is Cytoplasmic. The segment at 315 to 344 (AQGDSRTSLSQSASGRKDSSAPPALEGKKG) is disordered. The span at 318 to 328 (DSRTSLSQSAS) shows a compositional bias: polar residues. C382 is subject to Cysteine methyl ester. Residue C382 is the site of S-farnesyl cysteine attachment. A propeptide spans 383–385 (SLC) (removed in mature form).

It belongs to the G-protein coupled receptor 1 family. In terms of assembly, interacts (non-isoprenylated C-terminus) with PDZK1. Isoprenylation does not influence ligand binding but is required for efficient coupling to the effectors adenylyl cyclase and phospholipase C.

The protein resides in the cell membrane. Its function is as follows. Receptor for prostacyclin (prostaglandin I2 or PGI2). The activity of this receptor is mediated by G(s) proteins which activate adenylate cyclase. The protein is Prostacyclin receptor (PTGIR) of Bos taurus (Bovine).